The primary structure comprises 256 residues: 5'-nucleotidase SurE (256 aa).

A divalent metal cation contacts are provided by aspartate 9, aspartate 10, serine 40, and asparagine 94.

The protein belongs to the SurE nucleotidase family. A divalent metal cation serves as cofactor.

Its subcellular location is the cytoplasm. The catalysed reaction is a ribonucleoside 5'-phosphate + H2O = a ribonucleoside + phosphate. Functionally, nucleotidase that shows phosphatase activity on nucleoside 5'-monophosphates. This chain is 5'-nucleotidase SurE, found in Campylobacter fetus subsp. fetus (strain 82-40).